The following is an 84-amino-acid chain: Small ribosomal subunit protein uS17 (84 aa).

This sequence belongs to the universal ribosomal protein uS17 family. Part of the 30S ribosomal subunit.

Its function is as follows. One of the primary rRNA binding proteins, it binds specifically to the 5'-end of 16S ribosomal RNA. The protein is Small ribosomal subunit protein uS17 of Borreliella afzelii (strain PKo) (Borrelia afzelii).